The following is a 288-amino-acid chain: S-methyl-5'-thioadenosine phosphorylase (288 aa).

Phosphate contacts are provided by residues serine 12, 54–55, and 87–88; these read RH and SA. Methionine 186 is a binding site for substrate. A phosphate-binding site is contributed by threonine 187. 210-212 serves as a coordination point for substrate; the sequence is DYD.

This sequence belongs to the PNP/MTAP phosphorylase family. MTAP subfamily. In terms of assembly, homohexamer. Dimer of a homotrimer.

The catalysed reaction is S-methyl-5'-thioadenosine + phosphate = 5-(methylsulfanyl)-alpha-D-ribose 1-phosphate + adenine. The protein operates within amino-acid biosynthesis; L-methionine biosynthesis via salvage pathway; S-methyl-5-thio-alpha-D-ribose 1-phosphate from S-methyl-5'-thioadenosine (phosphorylase route): step 1/1. Catalyzes the reversible phosphorylation of S-methyl-5'-thioadenosine (MTA) to adenine and 5-methylthioribose-1-phosphate. Involved in the breakdown of MTA, a major by-product of polyamine biosynthesis. Responsible for the first step in the methionine salvage pathway after MTA has been generated from S-adenosylmethionine. Has broad substrate specificity with 6-aminopurine nucleosides as preferred substrates. The polypeptide is S-methyl-5'-thioadenosine phosphorylase (Chloroflexus aurantiacus (strain ATCC 29366 / DSM 635 / J-10-fl)).